The following is a 569-amino-acid chain: MLCVMMLLFSAIASFPVSAQAKDQDAGILIIYSTLDGKESSQVKMLDLLAGHFTSHVTVKKDSDVEASDFKGKDHVIYYGQTKRKLSQKLLSLISGVKKPVVAIGYNAGQISQFSGLSLARKENVFQVHSRSEKADVSLESGLNVLSVSGLKGTALYTFKADEGTTHSFIWKTKKGNVYIGLTNLLNDNLIVAKQLREAFGEKAGTTLLYLRLEDISPMSDEKLLLQAGTYLHKRHIPFILAVIPVYLNPETGDKVYLSNQPKMVKVLKKLQSMGGSIIVHGYTHAYRYSETGEGFEFWDAKADQPITSGNAEDPPSILEKEQDFPNEQAYHSYLEPFREKEETYTKQKLTRAIEDLTSSGLYPLAFEAPHYTMSEYGYQIASQYFTSIFGQVQLSSTTWKTSGAPPFVTAPSMLHGMTLYPETIGFVDTSKQNPLGEMEEHISQMIDFEGGVAGGFYHPYLGMKYLPELVDQMERIPDSEWLDLKKTKQTVKTDKVEIHTSGDGTIQVKNGVSPIYEFFDHHRQTPLEKALWILSAVVLLFVIMFVSYTFYLRATLKKRIFKERRSLG.

A signal peptide spans 1-21 (MLCVMMLLFSAIASFPVSAQA). Over 22-530 (KDQDAGILII…DHHRQTPLEK (509 aa)) the chain is Extracellular. A helical membrane pass occupies residues 531–551 (ALWILSAVVLLFVIMFVSYTF). Residues 552 to 569 (YLRATLKKRIFKERRSLG) lie on the Cytoplasmic side of the membrane.

Its subcellular location is the cell membrane. This is an uncharacterized protein from Bacillus subtilis (strain 168).